A 202-amino-acid polypeptide reads, in one-letter code: GTP cyclohydrolase-2 (202 aa).

48–52 (RLHSE) contributes to the GTP binding site. The Zn(2+) site is built by Cys53, Cys64, and Cys66. GTP contacts are provided by residues Gln69, 91 to 93 (EGR), and Thr113. Asp125 serves as the catalytic Proton acceptor. The active-site Nucleophile is the Arg127. GTP-binding residues include Thr148 and Lys153.

Belongs to the GTP cyclohydrolase II family. The cofactor is Zn(2+).

It catalyses the reaction GTP + 4 H2O = 2,5-diamino-6-hydroxy-4-(5-phosphoribosylamino)-pyrimidine + formate + 2 phosphate + 3 H(+). The protein operates within cofactor biosynthesis; riboflavin biosynthesis; 5-amino-6-(D-ribitylamino)uracil from GTP: step 1/4. Catalyzes the conversion of GTP to 2,5-diamino-6-ribosylamino-4(3H)-pyrimidinone 5'-phosphate (DARP), formate and pyrophosphate. This is GTP cyclohydrolase-2 from Colwellia psychrerythraea (strain 34H / ATCC BAA-681) (Vibrio psychroerythus).